Consider the following 470-residue polypeptide: MNPNQKILCTSATALVIGTIAVLIGITNLGLNIGLHLKPSCNCSHSQPEATNASQTIINNYYNDTNITQISNTNIQVEERAIRDFNNLTKGLCTINSWHIYGKDNAVRIGEDSDVLVTREPYVSCDPDECRFYALSQGTTIRGKHSNGTIHDRSQYRALISWPLSSPPTVYNSRVECIGWSSTSCHDGKTRMSICISGPNNNASAVIWYNRRPVTEINTWARNILRTQESECVCHNGVCPVVFTDGSATGPAETRIYYFKEGKILKWEPLAGTAKHIEECSCYGERAEITCTCRDNWQGSNRPVIRIDPVAMTHTSQYICSPVLTDNPRPNDPTVGKCNDPYPGNNNNGVKGFSYLDGVNTWLGRTISIASRSGYEMLKVPNALTDDKSKPTQGQTIVLNTDWSGYSGSFMDYWAEGECYRACFYVELIRGRPKEDKVWWTSNSIVSMCSSTEFLGQWDWPDGAKIEYFL.

At 1 to 14 the chain is on the intravirion side; that stretch reads MNPNQKILCTSATA. Residues 11-33 are involved in apical transport and lipid raft association; sequence SATALVIGTIAVLIGITNLGLNI. Residues 15 to 35 traverse the membrane as a helical segment; that stretch reads LVIGTIAVLIGITNLGLNIGL. Residues 36 to 89 form a hypervariable stalk region region; it reads HLKPSCNCSHSQPEATNASQTIINNYYNDTNITQISNTNIQVEERAIRDFNNLT. Over 36 to 470 the chain is Virion surface; it reads HLKPSCNCSH…PDGAKIEYFL (435 aa). N-linked (GlcNAc...) asparagine; by host glycans are attached at residues asparagine 42, asparagine 52, asparagine 63, asparagine 66, and asparagine 87. Residues 92–470 are head of neuraminidase; that stretch reads LCTINSWHIY…PDGAKIEYFL (379 aa). 9 disulfide bridges follow: cysteine 93–cysteine 419, cysteine 125–cysteine 130, cysteine 177–cysteine 195, cysteine 185–cysteine 232, cysteine 234–cysteine 239, cysteine 280–cysteine 293, cysteine 282–cysteine 291, cysteine 320–cysteine 338, and cysteine 423–cysteine 449. Residue arginine 119 participates in substrate binding. N-linked (GlcNAc...) asparagine; by host glycosylation occurs at asparagine 147. The active-site Proton donor/acceptor is aspartate 152. Arginine 153 serves as a coordination point for substrate. An N-linked (GlcNAc...) asparagine; by host glycan is attached at asparagine 202. Residue 278–279 coordinates substrate; it reads EE. A substrate-binding site is contributed by arginine 294. The Ca(2+) site is built by aspartate 295, glycine 299, aspartate 326, and asparagine 348. Arginine 372 is a substrate binding site. Tyrosine 406 (nucleophile) is an active-site residue.

Belongs to the glycosyl hydrolase 34 family. In terms of assembly, homotetramer. It depends on Ca(2+) as a cofactor. Post-translationally, N-glycosylated.

The protein localises to the virion membrane. The protein resides in the host apical cell membrane. It carries out the reaction Hydrolysis of alpha-(2-&gt;3)-, alpha-(2-&gt;6)-, alpha-(2-&gt;8)- glycosidic linkages of terminal sialic acid residues in oligosaccharides, glycoproteins, glycolipids, colominic acid and synthetic substrates.. Its activity is regulated as follows. Inhibited by the neuraminidase inhibitors zanamivir (Relenza) and oseltamivir (Tamiflu). These drugs interfere with the release of progeny virus from infected cells and are effective against all influenza strains. Resistance to neuraminidase inhibitors is quite rare. Functionally, catalyzes the removal of terminal sialic acid residues from viral and cellular glycoconjugates. Cleaves off the terminal sialic acids on the glycosylated HA during virus budding to facilitate virus release. Additionally helps virus spread through the circulation by further removing sialic acids from the cell surface. These cleavages prevent self-aggregation and ensure the efficient spread of the progeny virus from cell to cell. Otherwise, infection would be limited to one round of replication. Described as a receptor-destroying enzyme because it cleaves a terminal sialic acid from the cellular receptors. May facilitate viral invasion of the upper airways by cleaving the sialic acid moieties on the mucin of the airway epithelial cells. Likely to plays a role in the budding process through its association with lipid rafts during intracellular transport. May additionally display a raft-association independent effect on budding. Plays a role in the determination of host range restriction on replication and virulence. Sialidase activity in late endosome/lysosome traffic seems to enhance virus replication. The chain is Neuraminidase from Aves.